Reading from the N-terminus, the 846-residue chain is Neurotactin (846 aa).

The tract at residues M1–R222 is disordered. At M1 to D324 the chain is on the cytoplasmic side. A compositionally biased stretch (low complexity) spans P11–E20. The span at E23–T42 shows a compositional bias: basic and acidic residues. At T28 the chain carries Phosphothreonine; by PKC. T42 is modified (phosphothreonine). Phosphoserine is present on S44. T47 is modified (phosphothreonine). S48 and S52 each carry phosphoserine. Residues A63–K74 are compositionally biased toward basic and acidic residues. S75 bears the Phosphoserine; by PKC mark. S77 is subject to Phosphoserine. 4 stretches are compositionally biased toward basic and acidic residues: residues D95–P111, L141–N155, G163–R178, and P185–A205. At S103 the chain carries Phosphoserine; by PKC. S169 bears the Phosphoserine; by PKC mark. 2 positions are modified to phosphoserine: S186 and S203. At T206 the chain carries Phosphothreonine. The residue at position 256 (S256) is a Phosphoserine. At T259 the chain carries Phosphothreonine. Phosphoserine is present on S263. The residue at position 269 (T269) is a Phosphothreonine. Residues A325–T346 form a helical; Signal-anchor for type II membrane protein membrane-spanning segment. The Extracellular portion of the chain corresponds to H347–D846. 3 N-linked (GlcNAc...) asparagine glycosylation sites follow: N410, N417, and N428. Cystine bridges form between C422–C437 and C600–C605. 3 N-linked (GlcNAc...) asparagine glycosylation sites follow: N636, N691, and N720. A disulfide bridge connects residues C738 and C830.

It in the C-terminal section; belongs to the type-B carboxylesterase/lipase family. In terms of tissue distribution, late in embryogenesis, expression is restricted to cells of the peripheral and central nervous system undergoing proliferation and differentiation. Also expressed in larval CNS, mesoderm and imaginal disks.

It is found in the membrane. May mediate or modulate cell adhesion between embryonic cells during development. In Drosophila melanogaster (Fruit fly), this protein is Neurotactin (Nrt).